Here is a 206-residue protein sequence, read N- to C-terminus: Superoxide dismutase [Mn] (206 aa).

4 residues coordinate Mn(2+): histidine 27, histidine 82, aspartate 168, and histidine 172.

Belongs to the iron/manganese superoxide dismutase family. Mn(2+) serves as cofactor.

It carries out the reaction 2 superoxide + 2 H(+) = H2O2 + O2. Destroys superoxide anion radicals which are normally produced within the cells and which are toxic to biological systems. In Lactococcus lactis subsp. lactis (strain IL1403) (Streptococcus lactis), this protein is Superoxide dismutase [Mn] (sodA).